The following is a 127-amino-acid chain: MPRLMGVDIPNDKQIQYSLTYLYGLGLYRAREVCEKLGIDPTSPASDISDEDVGRIAALLERDYLVEGPLRRQVTQNISRMREIKSYRGIRHRVSLPVRGQRTKTNARTRKGPRKTVAGKKGVKDLR.

The segment at 97-127 (PVRGQRTKTNARTRKGPRKTVAGKKGVKDLR) is disordered. Positions 101-118 (QRTKTNARTRKGPRKTVA) are enriched in basic residues.

This sequence belongs to the universal ribosomal protein uS13 family. In terms of assembly, part of the 30S ribosomal subunit. Forms a loose heterodimer with protein S19. Forms two bridges to the 50S subunit in the 70S ribosome.

Located at the top of the head of the 30S subunit, it contacts several helices of the 16S rRNA. In the 70S ribosome it contacts the 23S rRNA (bridge B1a) and protein L5 of the 50S subunit (bridge B1b), connecting the 2 subunits; these bridges are implicated in subunit movement. Contacts the tRNAs in the A and P-sites. The polypeptide is Small ribosomal subunit protein uS13 (Rhodopirellula baltica (strain DSM 10527 / NCIMB 13988 / SH1)).